The sequence spans 396 residues: uncharacterized protein (396 aa).

The next 12 helical transmembrane spans lie at 8 to 28 (TASGMYINYFFLGMVNIILAS), 44 to 64 (ISYVIAAIGFGKLLTYGISGV), 73 to 93 (PLVVASAGIMAVFLVGIPLSP), 97 to 117 (LAFVFALLAGVANSAMDAGTY), 133 to 153 (VLVKAFMSVGAALLPLLITFL), 158 to 178 (MFYGFAFYLPAAVYLLNIIYL), 213 to 233 (ALIIIGFTSTALFTVSQIWLP), 250 to 270 (LLSYYSIGSLASVLLLAVLLN), 276 to 296 (VFITLLYPIITLCTLAVMLTV), 304 to 324 (ITAFFLGFSTAGVFQITITLM), 338 to 358 (IVATASSLASILLPIATGLIA), and 363 to 383 (IAHIFIFDFGIAVIGTAAAAF).

This sequence belongs to the major facilitator superfamily.

The protein resides in the cell membrane. This is an uncharacterized protein from Bacillus subtilis (strain 168).